A 74-amino-acid chain; its full sequence is Conotoxin ArMKLT2-041 (74 aa).

The N-terminal stretch at 1–22 is a signal peptide; the sequence is MKLTCVLIVAVLFLTACQLIAA. The propeptide occupies 23 to 46; it reads DDSRDLQKFPRRKMRDGMLNTKNT. Gln49 is subject to Pyrrolidone carboxylic acid. Disulfide bonds link Cys50/Cys65, Cys57/Cys68, and Cys64/Cys73.

It belongs to the conotoxin O1 superfamily. In terms of tissue distribution, expressed by the venom duct.

Its subcellular location is the secreted. The polypeptide is Conotoxin ArMKLT2-041 (Conus arenatus (Sand-dusted cone)).